A 107-amino-acid polypeptide reads, in one-letter code: Glutaconyl-CoA decarboxylase subunit delta (107 aa).

A helical transmembrane segment spans residues 10–32 (MINMTIVFGVLIVLGILMVLIHA). Positions 37–60 (KKVQGKKKPVVAKPAPSAAASKRQ) are disordered. Over residues 47 to 57 (VAKPAPSAAAS) the composition is skewed to low complexity.

This sequence belongs to the OadG family. In terms of assembly, heterooctamer consisting of two alpha, two beta, two gamma and two delta subunits.

The protein resides in the cell membrane. It catalyses the reaction (2E)-glutaconyl-CoA + Na(+)(in) + H(+) = (2E)-butenoyl-CoA + Na(+)(out) + CO2. The protein operates within amino-acid degradation; L-glutamate degradation via hydroxyglutarate pathway; crotonoyl-CoA from L-glutamate: step 5/5. In terms of biological role, part of the primary sodium pump glutaconyl-CoA decarboxylase (GCD). Possible membrane anchor for the alpha subunit. The sequence is that of Glutaconyl-CoA decarboxylase subunit delta (gcdD) from Acidaminococcus fermentans (strain ATCC 25085 / DSM 20731 / CCUG 9996 / CIP 106432 / VR4).